The primary structure comprises 182 residues: Crossover junction endodeoxyribonuclease RuvC (182 aa).

Residues D7, E69, and D141 contribute to the active site. Residues D7, E69, and D141 each coordinate Mg(2+).

This sequence belongs to the RuvC family. As to quaternary structure, homodimer which binds Holliday junction (HJ) DNA. The HJ becomes 2-fold symmetrical on binding to RuvC with unstacked arms; it has a different conformation from HJ DNA in complex with RuvA. In the full resolvosome a probable DNA-RuvA(4)-RuvB(12)-RuvC(2) complex forms which resolves the HJ. Mg(2+) serves as cofactor.

The protein resides in the cytoplasm. It catalyses the reaction Endonucleolytic cleavage at a junction such as a reciprocal single-stranded crossover between two homologous DNA duplexes (Holliday junction).. Functionally, the RuvA-RuvB-RuvC complex processes Holliday junction (HJ) DNA during genetic recombination and DNA repair. Endonuclease that resolves HJ intermediates. Cleaves cruciform DNA by making single-stranded nicks across the HJ at symmetrical positions within the homologous arms, yielding a 5'-phosphate and a 3'-hydroxyl group; requires a central core of homology in the junction. The consensus cleavage sequence is 5'-(A/T)TT(C/G)-3'. Cleavage occurs on the 3'-side of the TT dinucleotide at the point of strand exchange. HJ branch migration catalyzed by RuvA-RuvB allows RuvC to scan DNA until it finds its consensus sequence, where it cleaves and resolves the cruciform DNA. The polypeptide is Crossover junction endodeoxyribonuclease RuvC (Polaromonas naphthalenivorans (strain CJ2)).